The chain runs to 198 residues: IMP cyclohydrolase (198 aa).

The protein belongs to the archaeal IMP cyclohydrolase family.

It carries out the reaction IMP + H2O = 5-formamido-1-(5-phospho-D-ribosyl)imidazole-4-carboxamide. It functions in the pathway purine metabolism; IMP biosynthesis via de novo pathway; IMP from 5-formamido-1-(5-phospho-D-ribosyl)imidazole-4-carboxamide: step 1/1. Catalyzes the cyclization of 5-formylamidoimidazole-4-carboxamide ribonucleotide to IMP. This Methanopyrus kandleri (strain AV19 / DSM 6324 / JCM 9639 / NBRC 100938) protein is IMP cyclohydrolase.